Here is a 227-residue protein sequence, read N- to C-terminus: ATP-dependent Clp protease proteolytic subunit (227 aa).

Catalysis depends on Ser123, which acts as the Nucleophile. Residue His148 is part of the active site.

Belongs to the peptidase S14 family. Fourteen ClpP subunits assemble into 2 heptameric rings which stack back to back to give a disk-like structure with a central cavity, resembling the structure of eukaryotic proteasomes.

It is found in the cytoplasm. The enzyme catalyses Hydrolysis of proteins to small peptides in the presence of ATP and magnesium. alpha-casein is the usual test substrate. In the absence of ATP, only oligopeptides shorter than five residues are hydrolyzed (such as succinyl-Leu-Tyr-|-NHMec, and Leu-Tyr-Leu-|-Tyr-Trp, in which cleavage of the -Tyr-|-Leu- and -Tyr-|-Trp bonds also occurs).. In terms of biological role, cleaves peptides in various proteins in a process that requires ATP hydrolysis. Has a chymotrypsin-like activity. Plays a major role in the degradation of misfolded proteins. The chain is ATP-dependent Clp protease proteolytic subunit from Chlorobium phaeobacteroides (strain DSM 266 / SMG 266 / 2430).